A 739-amino-acid chain; its full sequence is Catalase-peroxidase (739 aa).

Residues 1–23 form the signal peptide; it reads MLKKIVTALGMSGMLLASNSAIA. The segment at residues 100–221 is a cross-link (tryptophyl-tyrosyl-methioninium (Trp-Tyr) (with M-247)); it reads WHDAGTYRIY…YAATQMGLIY (122 aa). His101 (proton acceptor) is an active-site residue. Positions 221–247 form a cross-link, tryptophyl-tyrosyl-methioninium (Tyr-Met) (with W-100); it reads YVNPEGPDGKPDIKGAASEIRQAFRAM. His262 contacts heme b.

It belongs to the peroxidase family. Peroxidase/catalase subfamily. As to quaternary structure, homodimer or homotetramer. Requires heme b as cofactor. In terms of processing, formation of the three residue Trp-Tyr-Met cross-link is important for the catalase, but not the peroxidase activity of the enzyme.

It catalyses the reaction H2O2 + AH2 = A + 2 H2O. The catalysed reaction is 2 H2O2 = O2 + 2 H2O. Its function is as follows. Bifunctional enzyme with both catalase and broad-spectrum peroxidase activity. This Francisella tularensis subsp. novicida (strain U112) protein is Catalase-peroxidase.